The chain runs to 192 residues: Ion-translocating oxidoreductase complex subunit B (192 aa).

Positions 1 to 26 are hydrophobic; that stretch reads MSAVWIAVIAISLLGLIFGLILGYAS. In terms of domain architecture, 4Fe-4S spans 32–91; it reads QDDPVVEKIDELLPQSQCGQCGYPGCRPYAEAVGAQGEKINRCAPGGEAVMLKIAALLNV. 12 residues coordinate [4Fe-4S] cluster: Cys49, Cys52, Cys57, Cys74, Cys117, Cys120, Cys123, Cys127, Cys147, Cys150, Cys153, and Cys157. 4Fe-4S ferredoxin-type domains are found at residues 108 to 137 and 138 to 167; these read MLAV…GATR and AMHT…LVPV.

The protein belongs to the 4Fe4S bacterial-type ferredoxin family. RnfB subfamily. The complex is composed of six subunits: RnfA, RnfB, RnfC, RnfD, RnfE and RnfG. [4Fe-4S] cluster serves as cofactor.

It is found in the cell inner membrane. In terms of biological role, part of a membrane-bound complex that couples electron transfer with translocation of ions across the membrane. This is Ion-translocating oxidoreductase complex subunit B from Klebsiella pneumoniae (strain 342).